A 119-amino-acid chain; its full sequence is Acidic phospholipase A2 2 (119 aa).

Intrachain disulfides connect Cys11–Cys71, Cys26–Cys118, Cys28–Cys44, Cys43–Cys99, Cys50–Cys92, Cys60–Cys85, and Cys78–Cys90. Tyr27, Gly29, and Gly31 together coordinate Ca(2+). Residue His47 is part of the active site. Asp48 is a binding site for Ca(2+). Asp93 is a catalytic residue.

Belongs to the phospholipase A2 family. Group I subfamily. D49 sub-subfamily. In terms of assembly, homotrimer. Ca(2+) is required as a cofactor. In terms of tissue distribution, expressed by the venom gland.

Its subcellular location is the secreted. It carries out the reaction a 1,2-diacyl-sn-glycero-3-phosphocholine + H2O = a 1-acyl-sn-glycero-3-phosphocholine + a fatty acid + H(+). PLA2 catalyzes the calcium-dependent hydrolysis of the 2-acyl groups in 3-sn-phosphoglycerides. The sequence is that of Acidic phospholipase A2 2 from Naja naja (Indian cobra).